The primary structure comprises 570 residues: Trans-cinnamate:CoA ligase, peroxisomal (570 aa).

Positions 568–570 (ARL) match the Microbody targeting signal motif.

Belongs to the ATP-dependent AMP-binding enzyme family. As to quaternary structure, monomer. It depends on K(+) as a cofactor. Mostly expressed in flower organs, with highest levels in corollas and petal limbs, and, to a lesser extent, in petal tubes, sepals, pistils, stamen, stigma, anthers and ovaries. Also present at low levels in leaves, stems and roots.

The protein resides in the peroxisome. The catalysed reaction is (E)-4-coumarate + ATP + CoA = (E)-4-coumaroyl-CoA + AMP + diphosphate. It catalyses the reaction (E)-caffeate + ATP + CoA = (E)-caffeoyl-CoA + AMP + diphosphate. The enzyme catalyses (E)-cinnamate + ATP + CoA = (E)-cinnamoyl-CoA + AMP + diphosphate. It participates in phenylpropanoid metabolism; trans-cinnamate biosynthesis. Its pathway is phytoalexin biosynthesis; 3,4',5-trihydroxystilbene biosynthesis; 3,4',5-trihydroxystilbene from trans-4-coumarate: step 1/2. Functionally, involved in the biosynthesis of floral volatile benzenoid/phenylpropanoid (FVBP) scent (e.g. benzylbenzoate, phenylethylbenzoate, and methylbenzoate). Catalyzes the formation of CoA esters of cinnamic acid, and, with lower efficiency, of 4-coumaric acid and caffeic acid. This Petunia hybrida (Petunia) protein is Trans-cinnamate:CoA ligase, peroxisomal.